The sequence spans 510 residues: NKAP family protein (510 aa).

Residues 1 to 22 (MSHRERDRDRDRDSDRDRDRNR) show a composition bias toward basic and acidic residues. 3 disordered regions span residues 1–128 (MSHR…VEIQ), 149–220 (ERKD…NYNG), and 239–401 (VYER…PISE). Over residues 23 to 39 (YSRSRSRGSRSRSRSRS) the composition is skewed to basic residues. Over residues 40-89 (RSRDRNRNRDYNKDRSSNRDSYYNDRDYKKDRSSNRDRDYYDRDRNRDYK) the composition is skewed to basic and acidic residues. Residues 96-105 (SSGGGGGGSG) show a composition bias toward gly residues. Composition is skewed to low complexity over residues 112 to 123 (SSSYRESNSNNS) and 184 to 219 (NNNN…SNYN). Residues 262 to 273 (NKKKSKKSRRKS) are compositionally biased toward basic residues. Over residues 274 to 283 (SSNSDSSSSD) the composition is skewed to low complexity. Residues 292-322 (REKRKKSKSRKDKKKRKEKKKHQRKSSKRSS) show a composition bias toward basic residues. The segment covering 342–351 (DSDRSDSEGR) has biased composition (basic and acidic residues). Over residues 352–367 (SRKKRSKKRSKKRHDH) the composition is skewed to basic residues. Over residues 368–383 (HKESVHDASMWEEKVE) the composition is skewed to basic and acidic residues.

It belongs to the NKAP family.

In Dictyostelium discoideum (Social amoeba), this protein is NKAP family protein.